A 374-amino-acid polypeptide reads, in one-letter code: MKYLLPSAAAGLLLLAAQPTMAANTGGYATTDGGDVSGAVKKTARSLQEIVDIIEAAKKDSSGKAVKGGAYPLVITYNGNEDALIKAAEANICGQWSKDPRGVEIKEFTKGITILGTNGSSANFGIWMVNSSNVVVRNMRFGYMPGGAKDGDAIRIDNSPNVWIDHNEIFAKNFECAGTPDNDTTFESAVDIKKGATNVTVSYNYIHGVKKVGLSGSSNTDTGRDLTYHHNIYSDVNSRLPLQRGGKVHAYNNLYDGIKSSGFNVRQKGIALIESNWFENALNPVTARNDDSNFGTWELRNNNITSPSDFAKYKITWGKPSTPHINADDWKSTGKFPAVPYSYSPVSAQCVKDKLASYAGVGKNLAVLTAANCK.

The first 22 residues, 1–22, serve as a signal peptide directing secretion; sequence MKYLLPSAAAGLLLLAAQPTMA. A disulfide bridge links C93 with C176. Ca(2+) is bound by residues D150, D152, E187, and D191. The active site involves R239. The cysteines at positions 350 and 373 are disulfide-linked.

It belongs to the polysaccharide lyase 1 family. PLADES subfamily. Ca(2+) is required as a cofactor.

It is found in the secreted. It catalyses the reaction Eliminative cleavage of (1-&gt;4)-alpha-D-galacturonan to give oligosaccharides with 4-deoxy-alpha-D-galact-4-enuronosyl groups at their non-reducing ends.. The protein operates within glycan metabolism; pectin degradation; 2-dehydro-3-deoxy-D-gluconate from pectin: step 2/5. Involved in maceration and soft-rotting of plant tissue. The polypeptide is Pectate lyase 1 (pel1) (Pectobacterium carotovorum (Erwinia carotovora)).